The sequence spans 683 residues: Methionine--tRNA ligase (683 aa).

Positions 14–24 (PYANGSIHLGH) match the 'HIGH' region motif. Zn(2+) contacts are provided by cysteine 145, cysteine 148, cysteine 158, and cysteine 161. Residues 331 to 335 (KMSKS) carry the 'KMSKS' region motif. Lysine 334 contributes to the ATP binding site. A tRNA-binding domain is found at 581-683 (AFAAVDLRVA…SGAKPGQRIK (103 aa)).

It belongs to the class-I aminoacyl-tRNA synthetase family. MetG type 1 subfamily. In terms of assembly, homodimer. It depends on Zn(2+) as a cofactor.

The protein localises to the cytoplasm. The catalysed reaction is tRNA(Met) + L-methionine + ATP = L-methionyl-tRNA(Met) + AMP + diphosphate. In terms of biological role, is required not only for elongation of protein synthesis but also for the initiation of all mRNA translation through initiator tRNA(fMet) aminoacylation. The polypeptide is Methionine--tRNA ligase (Pseudomonas fluorescens (strain SBW25)).